A 767-amino-acid polypeptide reads, in one-letter code: Probable beta-glucosidase K (767 aa).

N19 carries N-linked (GlcNAc...) asparagine glycosylation. D232 is an active-site residue. 3 N-linked (GlcNAc...) asparagine glycosylation sites follow: N324, N477, and N749. A PA14 domain is found at 405-552 (EGQPGLRMRF…DPERAIARAV (148 aa)). The interval 727 to 767 (LGRRGRSGSSPAVYRGRSNNVVNRTSHQGAQRISKGGFAAR) is disordered. Polar residues predominate over residues 743-757 (RSNNVVNRTSHQGAQ).

It belongs to the glycosyl hydrolase 3 family.

It localises to the secreted. It catalyses the reaction Hydrolysis of terminal, non-reducing beta-D-glucosyl residues with release of beta-D-glucose.. It participates in glycan metabolism; cellulose degradation. Its function is as follows. Beta-glucosidases are one of a number of cellulolytic enzymes involved in the degradation of cellulosic biomass. Catalyzes the last step releasing glucose from the inhibitory cellobiose. The polypeptide is Probable beta-glucosidase K (bglK) (Aspergillus fumigatus (strain ATCC MYA-4609 / CBS 101355 / FGSC A1100 / Af293) (Neosartorya fumigata)).